A 266-amino-acid polypeptide reads, in one-letter code: Beta-lactamase OXA-20 (266 aa).

The N-terminal stretch at 1-21 is a signal peptide; that stretch reads MIIRFLALLFSAVVLVSLGHA. Catalysis depends on Ser-72, which acts as the Acyl-ester intermediate. The residue at position 75 (Lys-75) is an N6-carboxylysine. 210–212 provides a ligand contact to substrate; the sequence is KTG.

This sequence belongs to the class-D beta-lactamase family.

It carries out the reaction a beta-lactam + H2O = a substituted beta-amino acid. Its activity is regulated as follows. Inhibited by clavulanic acid. Its function is as follows. This is an oxacillin-hydrolyzing beta-lactamase. The sequence is that of Beta-lactamase OXA-20 (bla) from Pseudomonas aeruginosa.